Reading from the N-terminus, the 164-residue chain is UPF0304 protein Ent638_2838 (164 aa).

The protein belongs to the UPF0304 family.

In Enterobacter sp. (strain 638), this protein is UPF0304 protein Ent638_2838.